Consider the following 38-residue polypeptide: Photosystem II reaction center protein L (38 aa).

The chain crosses the membrane as a helical span at residues 17–37 (SLFWGLLLIFVLAVLFSSYFF).

Belongs to the PsbL family. As to quaternary structure, PSII is composed of 1 copy each of membrane proteins PsbA, PsbB, PsbC, PsbD, PsbE, PsbF, PsbH, PsbI, PsbJ, PsbK, PsbL, PsbM, PsbT, PsbY, PsbZ, Psb30/Ycf12, at least 3 peripheral proteins of the oxygen-evolving complex and a large number of cofactors. It forms dimeric complexes.

The protein localises to the plastid. It is found in the chloroplast thylakoid membrane. Its function is as follows. One of the components of the core complex of photosystem II (PSII). PSII is a light-driven water:plastoquinone oxidoreductase that uses light energy to abstract electrons from H(2)O, generating O(2) and a proton gradient subsequently used for ATP formation. It consists of a core antenna complex that captures photons, and an electron transfer chain that converts photonic excitation into a charge separation. This subunit is found at the monomer-monomer interface and is required for correct PSII assembly and/or dimerization. This chain is Photosystem II reaction center protein L, found in Cyanidium caldarium (Red alga).